A 229-amino-acid polypeptide reads, in one-letter code: C-type lectin domain family 1 member B (229 aa).

At methionine 1–methionine 33 the chain is on the cytoplasmic side. Position 7 is a phosphotyrosine (tyrosine 7). An ITAM motif is present at residues tyrosine 7–leucine 10. A helical; Signal-anchor for type II membrane protein membrane pass occupies residues alanine 34–tryptophan 54. Residues serine 55 to proline 229 lie on the Extracellular side of the membrane. N-linked (GlcNAc...) asparagine glycosylation is present at asparagine 68. Cysteine 102 and cysteine 113 form a disulfide bridge. The 109-residue stretch at tyrosine 109–glutamate 217 folds into the C-type lectin domain. 2 N-linked (GlcNAc...) asparagine glycosylation sites follow: asparagine 120 and asparagine 134. Intrachain disulfides connect cysteine 130–cysteine 216 and cysteine 195–cysteine 208.

In terms of assembly, homodimer. Interacts (via cytoplasmic domain) with RACK1; promotes CLEC1B ubiquitination and proteasome-mediated degradation. Interacts (dimer) with SYK (via SH2 domains). Interacts with PDPN; the interaction is independent of CLEC1B glycosylation and activates CLEC1B. In terms of processing, glycosylated. Post-translationally, phosphorylated on tyrosine residue in response to rhodocytin binding. In terms of tissue distribution, expressed preferentially in the liver. Also expressed in immune cells of myeloid origin and on the surface of platelets.

Its subcellular location is the membrane. Functionally, C-type lectin-like receptor that functions as a platelet receptor for the lymphatic endothelial marker, PDPN. After ligand activation, signals via sequential activation of SRC and SYK tyrosine kinases leading to activation of PLCG2. Its function is as follows. (Microbial infection) Acts as a receptor for the platelet-aggregating snake venom protein rhodocytin. Rhodocytin binding leads to tyrosine phosphorylation and this promotes the binding of spleen tyrosine kinase (SYK) and initiation of downstream tyrosine phosphorylation events and activation of PLCG2. (Microbial infection) Acts as an attachment factor for Human immunodeficiency virus type 1 (HIV-1) and facilitates its capture by platelets. The sequence is that of C-type lectin domain family 1 member B (CLEC1B) from Homo sapiens (Human).